Consider the following 495-residue polypeptide: Putative lon protease homolog (495 aa).

52–59 is a binding site for ATP; the sequence is GPPGVGKS. The tract at residues 471–495 is disordered; the sequence is YSSETTGSQRDSTYNYANMDDRSYE. Positions 472 to 486 are enriched in polar residues; that stretch reads SSETTGSQRDSTYNY.

This sequence belongs to the peptidase S16 family.

This chain is Putative lon protease homolog, found in Thermoplasma volcanium (strain ATCC 51530 / DSM 4299 / JCM 9571 / NBRC 15438 / GSS1).